We begin with the raw amino-acid sequence, 537 residues long: Ribonuclease Y (537 aa).

Residues 4-24 form a helical membrane-spanning segment; sequence FPIIMSVFAAIIGLVIGYVSV. A disordered region spans residues 112-148; the sequence is ASTLDRKDDNLSNKEKALEQKEQSLSDKSKHIDAREE. One can recognise a KH domain in the interval 227 to 287; that stretch reads TNSTVHLPDD…IRREIARMTM (61 aa). The HD domain occupies 353–446; sequence VLRHSIEVAK…VAAADALSAA (94 aa).

The protein belongs to the RNase Y family.

The protein resides in the cell membrane. Its function is as follows. Endoribonuclease that initiates mRNA decay. The chain is Ribonuclease Y from Streptococcus sanguinis (strain SK36).